The chain runs to 228 residues: UPF0173 metal-dependent hydrolase lwe1590 (228 aa).

Belongs to the UPF0173 family.

The chain is UPF0173 metal-dependent hydrolase lwe1590 from Listeria welshimeri serovar 6b (strain ATCC 35897 / DSM 20650 / CCUG 15529 / CIP 8149 / NCTC 11857 / SLCC 5334 / V8).